The primary structure comprises 199 residues: GTP cyclohydrolase 1 (199 aa).

Zn(2+) contacts are provided by C89, H92, and C161.

Belongs to the GTP cyclohydrolase I family. As to quaternary structure, toroid-shaped homodecamer, composed of two pentamers of five dimers.

It catalyses the reaction GTP + H2O = 7,8-dihydroneopterin 3'-triphosphate + formate + H(+). It participates in cofactor biosynthesis; 7,8-dihydroneopterin triphosphate biosynthesis; 7,8-dihydroneopterin triphosphate from GTP: step 1/1. The sequence is that of GTP cyclohydrolase 1 from Bifidobacterium longum (strain NCC 2705).